The primary structure comprises 555 residues: MTTSSSGSVETSANSRLGTFSFASASFTDLLGGNAGAGGGGVSRYKAMTPPSLPLSPPPVSPSSFFNSPIGMNQADFLGSPVLLTSSIFPSPTTGAFASQHFDWRPEVAAAQSADQGGKDEQRNSYSDFSFQTAPASEEAVRTTTFQPPVPPAPLGDEAYRSQQQQQPWGYQQQPAGMDAGANAASFGAAPFQATSSEMAPQVQGGGGYSQPQSQRRSSDDGYNWRKYGQKQVKGSENPRSYYKCTFPNCPTKKKVERSLDGQITEIVYKGTHNHAKPQNTRRNSGSSAAQVLQSGGDMSEHSFGGMSGTAATPENSSASFGDDEIRVGSPRAGNGGGDEFDDDEPDSKRWRKDGDGEGISMAGNRTVREPRVVVQTMSDIDILDDGYRWRKYGQKVVKGNPNPRSYYKCTTAGCPVRKHVERASHDLRAVITTYEGKHNHDVPAARGSAALYRPAPPAAAATSSHPYLPNQPPPMSYQPTGPQPYALRPDGFGGQGPFGGVVGGSSFGGFSGFDDARGSYMSQHQQQQRQNDAMHASRAKEEPGDDMFFQNSLY.

2 disordered regions span residues 133–183 and 197–248; these read TAPA…AGAN and SEMA…CTFP. A compositionally biased stretch (low complexity) spans 163-183; that stretch reads QQQQQPWGYQQQPAGMDAGAN. The segment at residues 214–278 is a DNA-binding region (WRKY 1); the sequence is SQRRSSDDGY…YKGTHNHAKP (65 aa). The Nuclear localization signal signature appears at 253-259; that stretch reads KKKVERS. Residues 270-365 are disordered; that stretch reads KGTHNHAKPQ…DGEGISMAGN (96 aa). Polar residues-rich tracts occupy residues 277–294 and 310–320; these read KPQNTRRNSGSSAAQVLQ and TAATPENSSAS. The span at 347–356 shows a compositional bias: basic and acidic residues; the sequence is DSKRWRKDGD. Residues 379–444 constitute a DNA-binding region (WRKY 2); sequence SDIDILDDGY…YEGKHNHDVP (66 aa). Positions 466–555 are transcription repression of gibberellic acid (GA)-induced promoters; that stretch reads HPYLPNQPPP…DDMFFQNSLY (90 aa). The interval 514-555 is disordered; sequence FDDARGSYMSQHQQQQRQNDAMHASRAKEEPGDDMFFQNSLY.

It belongs to the WRKY group II-a family. Expressed in aleurone cells. Mostly expressed in aleurone layers and leaves, and, to a lower extent, in roots, panicles and embryos.

The protein resides in the nucleus. Functionally, transcription activator. Interacts specifically with the W box (5'-(T)TGAC[CT]-3'), a frequently occurring elicitor-responsive cis-acting element. Negative regulator of both gibberellic acid (GA) and abscisic acid (ABA) signaling in aleurone cells, probably by interfering with GAM1, via the specific repression of GA- and ABA-induced promoters. This is WRKY transcription factor WRKY24 from Oryza sativa subsp. japonica (Rice).